The primary structure comprises 318 residues: Elongation factor Ts, mitochondrial (318 aa).

The N-terminal 18 residues, 1 to 18 (MLLQRFFTRALHSTRQLY), are a transit peptide targeting the mitochondrion.

This sequence belongs to the EF-Ts family.

Its subcellular location is the mitochondrion. In terms of biological role, associates with the EF-Tu.GDP complex and induces the exchange of GDP to GTP. It remains bound to the aminoacyl-tRNA.EF-Tu.GTP complex up to the GTP hydrolysis stage on the ribosome. This chain is Elongation factor Ts, mitochondrial, found in Drosophila melanogaster (Fruit fly).